Here is a 59-residue protein sequence, read N- to C-terminus: Large ribosomal subunit protein bL32c (59 aa).

Residues 37–59 form a disordered region; sequence SRSFSSGNEHPKPKGFSGQQANK.

It belongs to the bacterial ribosomal protein bL32 family.

The protein resides in the plastid. It localises to the chloroplast. The chain is Large ribosomal subunit protein bL32c from Saccharum hybrid (Sugarcane).